The primary structure comprises 637 residues: DNA gyrase subunit B (637 aa).

One can recognise a Toprim domain in the interval 420-534 (CEIYIVEGDS…EGHVFIAQPP (115 aa)). Residues Glu-426, Asp-499, and Asp-501 each contribute to the Mg(2+) site.

Belongs to the type II topoisomerase GyrB family. Heterotetramer, composed of two GyrA and two GyrB chains. In the heterotetramer, GyrA contains the active site tyrosine that forms a transient covalent intermediate with DNA, while GyrB binds cofactors and catalyzes ATP hydrolysis. The cofactor is Mg(2+). It depends on Mn(2+) as a cofactor. Ca(2+) is required as a cofactor.

The protein localises to the cytoplasm. It catalyses the reaction ATP-dependent breakage, passage and rejoining of double-stranded DNA.. Its function is as follows. A type II topoisomerase that negatively supercoils closed circular double-stranded (ds) DNA in an ATP-dependent manner to modulate DNA topology and maintain chromosomes in an underwound state. Negative supercoiling favors strand separation, and DNA replication, transcription, recombination and repair, all of which involve strand separation. Also able to catalyze the interconversion of other topological isomers of dsDNA rings, including catenanes and knotted rings. Type II topoisomerases break and join 2 DNA strands simultaneously in an ATP-dependent manner. This Clostridium acetobutylicum (strain ATCC 824 / DSM 792 / JCM 1419 / IAM 19013 / LMG 5710 / NBRC 13948 / NRRL B-527 / VKM B-1787 / 2291 / W) protein is DNA gyrase subunit B.